The following is a 539-amino-acid chain: MAKTLLFGEEARRSMQAGVDKLANTVKVTLGPKGRNVILDKKFGSPLITNDGVTIAREIELEDAYENMGAQLVKEVATKTNDVAGDGTTTATLLAQAIIREGLKNVTAGANPILIRNGIKTAVEKAVEEIQKISKPVNGKEDIARVAAISAADEKIGKLIADAMEKVGNEGVITVEESKSMGTELDVVEGMQFDRGYVSAYMVTDTEKMEAVLDNPLVLITDKKISNIQDLLPLLEQIVQAGKKLLIIADDIEGEAMTTLVVNKLRGTFTCVGVKAPGFGDRRKEMLQDIATLTGGVVISDEVGGDLKEATLDMLGEAESVKVTKESTTIVNGRGNSEEIKNRVNQIKLQLEATTSEFDKEKLQERLAKLAGGVAVVKVGAATETELKESKLRIEDALAATKAAVEEGIVPGGGTAYVNVINEVAKLTSDIQDEQVGINIIVRSLEEPMRQIAHNAGLEGSVIIEKVKNSDAGVGFDALRGEYKDMIKAGIVDPTKVTRSALQNAASVASTFLTTEAAVADIPEKEMPQGAGMGMDGMY.

Residues 29–32 (TLGP), 86–90 (DGTTT), G413, 477–479 (DAL), and D493 contribute to the ATP site.

Belongs to the chaperonin (HSP60) family. In terms of assembly, forms a cylinder of 14 subunits composed of two heptameric rings stacked back-to-back. Interacts with the co-chaperonin GroES.

The protein resides in the cytoplasm. The catalysed reaction is ATP + H2O + a folded polypeptide = ADP + phosphate + an unfolded polypeptide.. In terms of biological role, together with its co-chaperonin GroES, plays an essential role in assisting protein folding. The GroEL-GroES system forms a nano-cage that allows encapsulation of the non-native substrate proteins and provides a physical environment optimized to promote and accelerate protein folding. The sequence is that of Chaperonin GroEL from Clostridium perfringens (strain 13 / Type A).